A 313-amino-acid chain; its full sequence is Porphobilinogen deaminase (313 aa).

Cysteine 242 is subject to S-(dipyrrolylmethanemethyl)cysteine.

It belongs to the HMBS family. In terms of assembly, monomer. It depends on dipyrromethane as a cofactor.

The catalysed reaction is 4 porphobilinogen + H2O = hydroxymethylbilane + 4 NH4(+). It participates in porphyrin-containing compound metabolism; protoporphyrin-IX biosynthesis; coproporphyrinogen-III from 5-aminolevulinate: step 2/4. Its function is as follows. Tetrapolymerization of the monopyrrole PBG into the hydroxymethylbilane pre-uroporphyrinogen in several discrete steps. In Escherichia coli O45:K1 (strain S88 / ExPEC), this protein is Porphobilinogen deaminase.